Here is a 406-residue protein sequence, read N- to C-terminus: Ribulose bisphosphate carboxylase large chain (406 aa).

Substrate contacts are provided by Asn101 and Thr151. Lys153 functions as the Proton acceptor in the catalytic mechanism. Lys155 serves as a coordination point for substrate. Mg(2+) contacts are provided by Lys179, Asp181, and Glu182. Residue Lys179 is modified to N6-carboxylysine. The active-site Proton acceptor is His272. Substrate-binding residues include Arg273, His305, and Ser357.

Belongs to the RuBisCO large chain family. Type I subfamily. In terms of assembly, heterohexadecamer of 8 large chains and 8 small chains; disulfide-linked. The disulfide link is formed within the large subunit homodimers. It depends on Mg(2+) as a cofactor. The disulfide bond which can form in the large chain dimeric partners within the hexadecamer appears to be associated with oxidative stress and protein turnover.

The protein localises to the plastid. It is found in the chloroplast. It catalyses the reaction 2 (2R)-3-phosphoglycerate + 2 H(+) = D-ribulose 1,5-bisphosphate + CO2 + H2O. The enzyme catalyses D-ribulose 1,5-bisphosphate + O2 = 2-phosphoglycolate + (2R)-3-phosphoglycerate + 2 H(+). RuBisCO catalyzes two reactions: the carboxylation of D-ribulose 1,5-bisphosphate, the primary event in carbon dioxide fixation, as well as the oxidative fragmentation of the pentose substrate in the photorespiration process. Both reactions occur simultaneously and in competition at the same active site. The sequence is that of Ribulose bisphosphate carboxylase large chain (rbcL) from Trichomanes striatum (Fern).